The chain runs to 75 residues: Neuropeptide-like protein 31 (75 aa).

The first 22 residues, 1 to 22, serve as a signal peptide directing secretion; it reads MISTSSILVLVVLLACFMAANA. 5 positions are modified to tyrosine amide: Tyr-29, Tyr-39, Tyr-49, Tyr-56, and Tyr-64. Tryptophan amide is present on Trp-73.

It belongs to the YARP (YGGW-amide related peptide) family. Expressed in hypoderm.

The protein localises to the secreted. Antimicrobial peptides that have antifungal activity against D.coniospora. Has weak antibacterial activity against Gram-positive bacteria M.luteus and Gram-negative E.coli. The chain is Neuropeptide-like protein 31 (nlp-31) from Caenorhabditis elegans.